The sequence spans 464 residues: Soluble pyridine nucleotide transhydrogenase (464 aa).

35–44 (DSRREVGGNC) is a binding site for FAD.

Belongs to the class-I pyridine nucleotide-disulfide oxidoreductase family. FAD is required as a cofactor.

The protein resides in the cytoplasm. It catalyses the reaction NAD(+) + NADPH = NADH + NADP(+). Its function is as follows. Conversion of NADPH, generated by peripheral catabolic pathways, to NADH, which can enter the respiratory chain for energy generation. The sequence is that of Soluble pyridine nucleotide transhydrogenase from Pseudomonas syringae pv. tomato (strain ATCC BAA-871 / DC3000).